A 136-amino-acid polypeptide reads, in one-letter code: Small ribosomal subunit protein uS11 (136 aa).

Disordered stretches follow at residues 1–20 and 115–136; these read MAQR…NVTN and VTPQ…EKAR. Positions 125-136 are enriched in basic residues; sequence PPKRVLKREKAR.

This sequence belongs to the universal ribosomal protein uS11 family. As to quaternary structure, part of the 30S ribosomal subunit. Interacts with proteins S7 and S18. Binds to IF-3.

Functionally, located on the platform of the 30S subunit, it bridges several disparate RNA helices of the 16S rRNA. Forms part of the Shine-Dalgarno cleft in the 70S ribosome. This Mycoplasmopsis pulmonis (strain UAB CTIP) (Mycoplasma pulmonis) protein is Small ribosomal subunit protein uS11.